Consider the following 966-residue polypeptide: Valine--tRNA ligase (966 aa).

The short motif at 48 to 58 (PNITGGLHLGH) is the 'HIGH' region element. Residues 348–368 (DYKDARKKIIEECKRLKILED) adopt a coiled-coil conformation. Residues 566-570 (KMSKS) carry the 'KMSKS' region motif. Position 569 (Lys-569) interacts with ATP. Residues 939–960 (FKKSQEKLNHYNKTKNKLLNQY) are a coiled coil.

The protein belongs to the class-I aminoacyl-tRNA synthetase family. ValS type 1 subfamily. Monomer.

The protein resides in the cytoplasm. It catalyses the reaction tRNA(Val) + L-valine + ATP = L-valyl-tRNA(Val) + AMP + diphosphate. In terms of biological role, catalyzes the attachment of valine to tRNA(Val). As ValRS can inadvertently accommodate and process structurally similar amino acids such as threonine, to avoid such errors, it has a 'posttransfer' editing activity that hydrolyzes mischarged Thr-tRNA(Val) in a tRNA-dependent manner. The protein is Valine--tRNA ligase of Blochmanniella floridana.